A 468-amino-acid chain; its full sequence is uncharacterized protein (468 aa).

6 consecutive transmembrane segments (helical) span residues 59–79 (IPIV…ALFI), 135–155 (TWIN…LLLV), 215–235 (VFPF…LSIL), 297–317 (THCC…MVLV), 348–368 (HFIP…LVSY), and 385–405 (VFTV…IILF).

It is found in the membrane. This is an uncharacterized protein from Caenorhabditis elegans.